An 896-amino-acid polypeptide reads, in one-letter code: Protein translocase subunit SecA (896 aa).

ATP is bound by residues Gln87, Gly105–Thr109, and Asp507. Residues Leu855–Pro879 are disordered. The segment covering Thr866–Arg876 has biased composition (basic and acidic residues). Residues Cys880, Cys882, Cys891, and His892 each coordinate Zn(2+).

Belongs to the SecA family. As to quaternary structure, monomer and homodimer. Part of the essential Sec protein translocation apparatus which comprises SecA, SecYEG and auxiliary proteins SecDF-YajC and YidC. Zn(2+) serves as cofactor.

It localises to the cell inner membrane. The protein localises to the cytoplasm. The catalysed reaction is ATP + H2O + cellular proteinSide 1 = ADP + phosphate + cellular proteinSide 2.. Its function is as follows. Part of the Sec protein translocase complex. Interacts with the SecYEG preprotein conducting channel. Has a central role in coupling the hydrolysis of ATP to the transfer of proteins into and across the cell membrane, serving both as a receptor for the preprotein-SecB complex and as an ATP-driven molecular motor driving the stepwise translocation of polypeptide chains across the membrane. The chain is Protein translocase subunit SecA from Legionella pneumophila (strain Lens).